We begin with the raw amino-acid sequence, 389 residues long: S-adenosylmethionine synthase (389 aa).

ATP is bound at residue His18. Asp20 contributes to the Mg(2+) binding site. Glu46 provides a ligand contact to K(+). Residues Glu59 and Gln103 each contribute to the L-methionine site. The flexible loop stretch occupies residues 103–113 (QSADIAMGVDS). Residues 168–170 (DSK), Asp244, 250–251 (RK), Ala267, and Lys271 contribute to the ATP site. Position 244 (Asp244) interacts with L-methionine. Lys275 is an L-methionine binding site.

Belongs to the AdoMet synthase family. Homotetramer; dimer of dimers. Mg(2+) is required as a cofactor. Requires K(+) as cofactor.

Its subcellular location is the cytoplasm. It catalyses the reaction L-methionine + ATP + H2O = S-adenosyl-L-methionine + phosphate + diphosphate. It participates in amino-acid biosynthesis; S-adenosyl-L-methionine biosynthesis; S-adenosyl-L-methionine from L-methionine: step 1/1. Catalyzes the formation of S-adenosylmethionine (AdoMet) from methionine and ATP. The overall synthetic reaction is composed of two sequential steps, AdoMet formation and the subsequent tripolyphosphate hydrolysis which occurs prior to release of AdoMet from the enzyme. The protein is S-adenosylmethionine synthase of Pelagibacter ubique (strain HTCC1062).